The sequence spans 318 residues: Protein RecA (318 aa).

53–60 (GPESSGKT) is an ATP binding site.

Belongs to the RecA family.

It localises to the cytoplasm. Functionally, can catalyze the hydrolysis of ATP in the presence of single-stranded DNA, the ATP-dependent uptake of single-stranded DNA by duplex DNA, and the ATP-dependent hybridization of homologous single-stranded DNAs. It interacts with LexA causing its activation and leading to its autocatalytic cleavage. This Bacteroides fragilis (strain YCH46) protein is Protein RecA.